The chain runs to 98 residues: UPF0390 protein zgc136864 (98 aa).

The segment covering 1–30 (MAQGKQKFKAQRPGGAKKHQNKPKGLKKGG) has biased composition (basic residues). 2 disordered regions span residues 1–38 (MAQG…PKKA) and 63–98 (TQKA…GPSK). The span at 83–98 (KSGTAGAPKPAAGPSK) shows a compositional bias: low complexity.

It belongs to the UPF0390 family.

In Danio rerio (Zebrafish), this protein is UPF0390 protein zgc136864.